Here is a 242-residue protein sequence, read N- to C-terminus: ATP-dependent dethiobiotin synthetase BioD (242 aa).

12-17 (EVGKTV) contributes to the ATP binding site. Mg(2+) is bound at residue Thr16. The active site involves Lys37. Ser41 is a substrate binding site. ATP is bound by residues Asp51 and 112 to 115 (EGAG). Mg(2+) contacts are provided by Asp51 and Glu112.

Belongs to the dethiobiotin synthetase family. As to quaternary structure, homodimer. The cofactor is Mg(2+).

It is found in the cytoplasm. It carries out the reaction (7R,8S)-7,8-diammoniononanoate + CO2 + ATP = (4R,5S)-dethiobiotin + ADP + phosphate + 3 H(+). It participates in cofactor biosynthesis; biotin biosynthesis; biotin from 7,8-diaminononanoate: step 1/2. Its function is as follows. Catalyzes a mechanistically unusual reaction, the ATP-dependent insertion of CO2 between the N7 and N8 nitrogen atoms of 7,8-diaminopelargonic acid (DAPA, also called 7,8-diammoniononanoate) to form a ureido ring. The chain is ATP-dependent dethiobiotin synthetase BioD from Bacillus anthracis (strain A0248).